A 514-amino-acid polypeptide reads, in one-letter code: Tryptophan decarboxylase 1 (514 aa).

Position 104 (phenylalanine 104) interacts with serotonin. The pyridoxal 5'-phosphate site is built by threonine 175 and serine 176. Histidine 214 contributes to the serotonin binding site. Position 273 (threonine 273) interacts with pyridoxal 5'-phosphate. The residue at position 330 (lysine 330) is an N6-(pyridoxal phosphate)lysine. The Proton donor role is filled by tyrosine 359. 2 residues coordinate pyridoxal 5'-phosphate: valine 380 and glycine 381.

Belongs to the group II decarboxylase family. Forms homodimers. The cofactor is pyridoxal 5'-phosphate.

The enzyme catalyses L-tryptophan + H(+) = tryptamine + CO2. It carries out the reaction 5-hydroxy-L-tryptophan + H(+) = serotonin + CO2. Involved in serotonin biosynthesis. Catalyzes the decarboxylation of L-tryptophan to produce tryptamine, which is converted to serotonin by tryptamine 5-hydroxylase. May play a major role in serotonin biosynthesis during senescence. Accumulation of serotonin attenuates leaf senescence. Catalyzes the decarboxylation of 5-hydroxy-L-tryptophan to produce serotonin. The sequence is that of Tryptophan decarboxylase 1 from Oryza sativa subsp. japonica (Rice).